The primary structure comprises 286 residues: Bifunctional protein FolD (286 aa).

NADP(+) is bound by residues 165 to 167 (GRS), S190, and V231.

Belongs to the tetrahydrofolate dehydrogenase/cyclohydrolase family. In terms of assembly, homodimer.

The enzyme catalyses (6R)-5,10-methylene-5,6,7,8-tetrahydrofolate + NADP(+) = (6R)-5,10-methenyltetrahydrofolate + NADPH. It carries out the reaction (6R)-5,10-methenyltetrahydrofolate + H2O = (6R)-10-formyltetrahydrofolate + H(+). The protein operates within one-carbon metabolism; tetrahydrofolate interconversion. Its function is as follows. Catalyzes the oxidation of 5,10-methylenetetrahydrofolate to 5,10-methenyltetrahydrofolate and then the hydrolysis of 5,10-methenyltetrahydrofolate to 10-formyltetrahydrofolate. The chain is Bifunctional protein FolD from Bacillus thuringiensis (strain Al Hakam).